The primary structure comprises 59 residues: Large ribosomal subunit protein bL32 (59 aa).

The protein belongs to the bacterial ribosomal protein bL32 family.

This is Large ribosomal subunit protein bL32 from Malacoplasma penetrans (strain HF-2) (Mycoplasma penetrans).